The primary structure comprises 625 residues: Chaperone protein HtpG (625 aa).

The tract at residues 1–332 is a; substrate-binding; it reads MSNKQNTAVQ…TEDLSLNVSR (332 aa). Residues 333-545 form a b region; the sequence is EIVQSSPVMS…KDAMDSQMER (213 aa). The c stretch occupies residues 546 to 625; the sequence is MMKMMQQEMP…ELIEAATLSR (80 aa).

This sequence belongs to the heat shock protein 90 family. As to quaternary structure, homodimer.

Its subcellular location is the cytoplasm. Its function is as follows. Molecular chaperone. Has ATPase activity. This chain is Chaperone protein HtpG, found in Chlorobium luteolum (strain DSM 273 / BCRC 81028 / 2530) (Pelodictyon luteolum).